The chain runs to 208 residues: Small ribosomal subunit protein uS4 (208 aa).

An S4 RNA-binding domain is found at 98–161; that stretch reads RRLDNVIYRL…RKMPVIAEAQ (64 aa).

The protein belongs to the universal ribosomal protein uS4 family. In terms of assembly, part of the 30S ribosomal subunit. Contacts protein S5. The interaction surface between S4 and S5 is involved in control of translational fidelity.

Its function is as follows. One of the primary rRNA binding proteins, it binds directly to 16S rRNA where it nucleates assembly of the body of the 30S subunit. With S5 and S12 plays an important role in translational accuracy. This chain is Small ribosomal subunit protein uS4, found in Oleidesulfovibrio alaskensis (strain ATCC BAA-1058 / DSM 17464 / G20) (Desulfovibrio alaskensis).